Consider the following 113-residue polypeptide: Protein FPV195 (113 aa).

It belongs to the poxviruses A31 family.

This is Protein FPV195 from Vertebrata (FPV).